We begin with the raw amino-acid sequence, 398 residues long: Small ribosomal subunit protein mS78 (rPPR3a) (398 aa).

Residues 1–19 constitute a mitochondrion transit peptide; that stretch reads MSSLSRVLRGTFNTCPIRR. PPR repeat units lie at residues 108-142, 143-173, 179-213, 214-248, 249-283, 284-318, and 319-353; these read KEGF…DCKR, SVLS…LPGK, DIVS…GLKP, DIVT…NVAI, DIRT…GLKP, DVFS…GYRP, and DKAT…RYLV.

Belongs to the PPR family. P subfamily. In terms of assembly, component of the mitochondrial ribosome small subunit.

Its subcellular location is the mitochondrion. The polypeptide is Small ribosomal subunit protein mS78 (rPPR3a) (Arabidopsis thaliana (Mouse-ear cress)).